The following is an 88-amino-acid chain: U2-ctenitoxin-Pn1a (88 aa).

An N-terminal signal peptide occupies residues 1–17 (MKVAILILSILVLAVAS). The propeptide occupies 18–34 (ETIEEYRDDFAVEELER). Intrachain disulfides connect Cys-37–Cys-51, Cys-44–Cys-57, Cys-48–Cys-86, Cys-50–Cys-71, and Cys-59–Cys-69. Residue Lys-88 is a propeptide.

Expressed by the venom gland.

Its subcellular location is the secreted. Functionally, inhibits voltage-gated sodium channels (Nav). Causes scratching, lacrimation, hypersalivation, sweating and agitation followed by spastic paralysis of the anterior and posterior extremities and death at dose levels of 1.62 mg/mouse. Insecticidal to the larval and adult forms of the house fly. This is U2-ctenitoxin-Pn1a from Phoneutria nigriventer (Brazilian armed spider).